Here is a 143-residue protein sequence, read N- to C-terminus: Transcriptional regulator MraZ (143 aa).

SpoVT-AbrB domains lie at 5-47 (THSP…TTRE) and 76-119 (ANAE…DAGT).

Belongs to the MraZ family. As to quaternary structure, forms oligomers.

It localises to the cytoplasm. Its subcellular location is the nucleoid. The sequence is that of Transcriptional regulator MraZ from Clavibacter michiganensis subsp. michiganensis (strain NCPPB 382).